A 446-amino-acid chain; its full sequence is Sorting nexin-30 (446 aa).

Residues 1–18 (MSGSSTPKSLPTSGQQSL) show a composition bias toward polar residues. The disordered stretch occupies residues 1 to 84 (MSGSSTPKSL…SSPASSSSLL (84 aa)). The span at 70 to 84 (TPADTSSPASSSSLL) shows a compositional bias: low complexity. Residues 98–219 (RDLFVTVDDP…VFLTAKDLNS (122 aa)) enclose the PX domain. Residues Arg-141, Gln-143, Lys-171, and Arg-185 each coordinate a 1,2-diacyl-sn-glycero-3-phospho-(1D-myo-inositol-3-phosphate). Residues 243–446 (KLRNRPVEFA…PLLQDKQEPK (204 aa)) enclose the BAR domain.

It belongs to the sorting nexin family.

The protein resides in the early endosome membrane. Functionally, involved in the regulation of endocytosis and in several stages of intracellular trafficking. Together with snx4, involved in autophagosome assembly. The sequence is that of Sorting nexin-30 (snx30) from Xenopus tropicalis (Western clawed frog).